The chain runs to 278 residues: Transcription initiation factor TFIID subunit 9 (278 aa).

A disordered region spans residues 193 to 278 (TTTKTVGSSG…EEEEFEFVTN (86 aa)). The segment covering 200-210 (SSGGSGGGGGQ) has biased composition (gly residues). The span at 231 to 240 (AAAVGSIAGA) shows a compositional bias: low complexity. Over residues 241 to 259 (SGSGAGSASGGGGGGGSSG) the composition is skewed to gly residues. The segment covering 269-278 (EEEEFEFVTN) has biased composition (acidic residues).

The protein belongs to the TAF9 family. As to quaternary structure, belongs to the TFIID complex which is composed of TATA binding protein (Tbp) and a number of TBP-associated factors (TAFs). Taf9 and Taf6 exist as a heterotetramer. Interacts with e(y)2.

It is found in the nucleus. Its function is as follows. TFIID is a multimeric protein complex that plays a central role in mediating promoter responses to various activators and repressors. This is Transcription initiation factor TFIID subunit 9 from Drosophila melanogaster (Fruit fly).